A 362-amino-acid polypeptide reads, in one-letter code: 3-dehydroquinate synthase (362 aa).

Residues 73-78, 107-111, 131-132, lysine 144, lysine 153, and 171-174 contribute to the NAD(+) site; these read DAEAGK, GAATD, TT, and TLQT. Positions 186, 249, and 265 each coordinate Zn(2+).

This sequence belongs to the sugar phosphate cyclases superfamily. Dehydroquinate synthase family. The cofactor is NAD(+). It depends on Co(2+) as a cofactor. Zn(2+) serves as cofactor.

Its subcellular location is the cytoplasm. It carries out the reaction 7-phospho-2-dehydro-3-deoxy-D-arabino-heptonate = 3-dehydroquinate + phosphate. Its pathway is metabolic intermediate biosynthesis; chorismate biosynthesis; chorismate from D-erythrose 4-phosphate and phosphoenolpyruvate: step 2/7. Catalyzes the conversion of 3-deoxy-D-arabino-heptulosonate 7-phosphate (DAHP) to dehydroquinate (DHQ). The polypeptide is 3-dehydroquinate synthase (Mycobacterium bovis (strain ATCC BAA-935 / AF2122/97)).